The chain runs to 812 residues: Hyaluronate lyase HylB (812 aa).

Residues 1 to 32 constitute a signal peptide (tat-type signal); sequence MFGTPSRRTFLTASALSAMALAASPTVTDAIA. Catalysis depends on residues Asn222, His272, and Tyr281.

This sequence belongs to the polysaccharide lyase 8 family. Predicted to be exported by the Tat system. The position of the signal peptide cleavage has been experimentally proven.

Its subcellular location is the secreted. It carries out the reaction [hyaluronan](n) = n 3-(4-deoxy-beta-D-gluc-4-enuronosyl)-N-acetyl-D-glucosamine + H2O. Functionally, degrades hyaluronic acid (HA) exclusively into HA disaccharides (HA-2). Produced HA-2s confer anti-inflammatory properties leading to reduced immunopathology in the mouse model of acne. This is Hyaluronate lyase HylB from Cutibacterium acnes (Propionibacterium acnes).